A 611-amino-acid polypeptide reads, in one-letter code: Translation initiation factor RLI1 (611 aa).

4Fe-4S ferredoxin-type domains lie at Arg7–Val31 and Arg46–Leu75. ABC transporter domains lie at Thr77 to Gly318 and Ala345 to Leu565. Residues Gly110 to Ser117 and Gly382 to Thr389 each bind ATP.

The protein belongs to the ABC transporter superfamily. ABCE family. In terms of assembly, component of the multifactor complex (MFC). The complex associates with pre-initiation complexes.

The protein resides in the cytoplasm. Its subcellular location is the nucleus. Component of the multifactor complex (MFC) involved in translation initiation. Required for the binding of MFC to the 40S ribosome. Required for the processing and nuclear export of the 60S and 40S ribosomal subunits. The polypeptide is Translation initiation factor RLI1 (RLI1) (Chaetomium thermophilum (strain DSM 1495 / CBS 144.50 / IMI 039719) (Thermochaetoides thermophila)).